A 129-amino-acid chain; its full sequence is Small ribosomal subunit protein uS9 (129 aa).

The protein belongs to the universal ribosomal protein uS9 family.

This Chlorobium phaeobacteroides (strain DSM 266 / SMG 266 / 2430) protein is Small ribosomal subunit protein uS9.